The chain runs to 365 residues: Putative clathrin assembly protein At4g40080 (365 aa).

Residues 29–167 enclose the ENTH domain; it reads NTKSKTLSFH…STSRIMGFFI (139 aa).

The protein resides in the membrane. Its subcellular location is the clathrin-coated pit. It localises to the golgi apparatus. It is found in the cytoplasmic vesicle. The protein localises to the clathrin-coated vesicle. This Arabidopsis thaliana (Mouse-ear cress) protein is Putative clathrin assembly protein At4g40080.